Consider the following 118-residue polypeptide: Non-specific lipid-transfer protein 1 (118 aa).

Positions 1-20 are cleaved as a signal peptide; that stretch reads MARLAVAIAVVAAVVVVLAA. 4 disulfide bridges follow: Cys-29–Cys-77, Cys-39–Cys-54, Cys-55–Cys-100, and Cys-75–Cys-114.

This sequence belongs to the plant LTP family.

Functionally, plant non-specific lipid-transfer proteins transfer phospholipids as well as galactolipids across membranes. May play a role in wax or cutin deposition in the cell walls of expanding epidermal cells and certain secretory tissues. The polypeptide is Non-specific lipid-transfer protein 1 (LTP1) (Sorghum bicolor (Sorghum)).